A 438-amino-acid polypeptide reads, in one-letter code: Aspartate--tRNA(Asp/Asn) ligase (438 aa).

Residue E176 coordinates L-aspartate. Residues 198–201 (QLYK) are aspartate. L-aspartate is bound at residue R220. ATP contacts are provided by residues 220–222 (RAE), 228–230 (RHL), and E361. 2 residues coordinate Mg(2+): E361 and S364. 2 residues coordinate L-aspartate: S364 and R368. Residue 409–412 (GADR) coordinates ATP.

It belongs to the class-II aminoacyl-tRNA synthetase family. Type 2 subfamily. In terms of assembly, homodimer. Requires Mg(2+) as cofactor.

The protein resides in the cytoplasm. It carries out the reaction tRNA(Asx) + L-aspartate + ATP = L-aspartyl-tRNA(Asx) + AMP + diphosphate. Functionally, aspartyl-tRNA synthetase with relaxed tRNA specificity since it is able to aspartylate not only its cognate tRNA(Asp) but also tRNA(Asn). Reaction proceeds in two steps: L-aspartate is first activated by ATP to form Asp-AMP and then transferred to the acceptor end of tRNA(Asp/Asn). The chain is Aspartate--tRNA(Asp/Asn) ligase from Methanococcus maripaludis (strain C5 / ATCC BAA-1333).